We begin with the raw amino-acid sequence, 72 residues long: uncharacterized protein (72 aa).

It is found in the plastid. The protein localises to the chloroplast. This is an uncharacterized protein from Oenothera berteroana (Bertero's evening primrose).